The sequence spans 271 residues: Digeranylgeranylglyceryl phosphate synthase (271 aa).

The next 8 membrane-spanning stretches (helical) occupy residues 11 to 31 (INCAMAALGVVVGELIAGARL), 33 to 53 (VGAVLAPVVAAVVCAGGNAIN), 88 to 108 (FAVGVGMATVINRMCLAIAAL), 125 to 145 (LIGNVMVSYLVGSCFLFGAAV), 149 to 169 (PAPAVWLFLLAFLANLVREIL), 201 to 221 (VFAIALAVLTPLPYLDGVVGW), 224 to 244 (LVLALPAAAVILLASVLAVAG), and 251 to 271 (AQRVVKVGMLLGLLAFLASLL).

It belongs to the UbiA prenyltransferase family. DGGGP synthase subfamily. Mg(2+) is required as a cofactor.

The protein resides in the cell membrane. It carries out the reaction sn-3-O-(geranylgeranyl)glycerol 1-phosphate + (2E,6E,10E)-geranylgeranyl diphosphate = 2,3-bis-O-(geranylgeranyl)-sn-glycerol 1-phosphate + diphosphate. It functions in the pathway membrane lipid metabolism; glycerophospholipid metabolism. In terms of biological role, prenyltransferase that catalyzes the transfer of the geranylgeranyl moiety of geranylgeranyl diphosphate (GGPP) to the C2 hydroxyl of (S)-3-O-geranylgeranylglyceryl phosphate (GGGP). This reaction is the second ether-bond-formation step in the biosynthesis of archaeal membrane lipids. The sequence is that of Digeranylgeranylglyceryl phosphate synthase from Methanopyrus kandleri (strain AV19 / DSM 6324 / JCM 9639 / NBRC 100938).